Here is a 258-residue protein sequence, read N- to C-terminus: Phosphoadenosine 5'-phosphosulfate reductase (258 aa).

Cysteine 244 (nucleophile; cysteine thiosulfonate intermediate) is an active-site residue.

It belongs to the PAPS reductase family. CysH subfamily.

It localises to the cytoplasm. The catalysed reaction is [thioredoxin]-disulfide + sulfite + adenosine 3',5'-bisphosphate + 2 H(+) = [thioredoxin]-dithiol + 3'-phosphoadenylyl sulfate. It participates in sulfur metabolism; hydrogen sulfide biosynthesis; sulfite from sulfate: step 3/3. In terms of biological role, catalyzes the formation of sulfite from phosphoadenosine 5'-phosphosulfate (PAPS) using thioredoxin as an electron donor. The protein is Phosphoadenosine 5'-phosphosulfate reductase of Vibrio vulnificus (strain YJ016).